A 150-amino-acid polypeptide reads, in one-letter code: Ribonuclease H (150 aa).

Residues 1–141 (MKSIEVHTDG…VDVLARNQAI (141 aa)) form the RNase H type-1 domain. Residues Asp-9, Glu-47, Asp-69, and Asp-133 each coordinate Mg(2+).

It belongs to the RNase H family. Monomer. Mg(2+) serves as cofactor.

Its subcellular location is the cytoplasm. The catalysed reaction is Endonucleolytic cleavage to 5'-phosphomonoester.. Endonuclease that specifically degrades the RNA of RNA-DNA hybrids. This chain is Ribonuclease H, found in Xanthomonas axonopodis pv. citri (strain 306).